The sequence spans 198 residues: Peroxynitrite isomerase (198 aa).

Residues G20–G26 carry the GXWXGXG motif. H189 lines the heme b pocket.

The protein belongs to the nitrobindin family. As to quaternary structure, homodimer. The cofactor is heme b.

It carries out the reaction peroxynitrite = nitrate. It participates in nitrogen metabolism. Functionally, heme-binding protein able to scavenge peroxynitrite and to protect free L-tyrosine against peroxynitrite-mediated nitration, by acting as a peroxynitrite isomerase that converts peroxynitrite to nitrate. Therefore, this protein likely plays a role in peroxynitrite sensing and in the detoxification of reactive nitrogen and oxygen species (RNS and ROS, respectively). Is able to bind nitric oxide (NO) in vitro, but may act as a sensor of peroxynitrite levels in vivo. The sequence is that of Peroxynitrite isomerase from Leifsonia xyli subsp. xyli (strain CTCB07).